The sequence spans 209 residues: SAGA-associated factor 11 homolog 1 (209 aa).

Positions 1-36 are disordered; it reads MSRTIVVKNPRTSGKDEDKAQIPSQDELPSGSSGAK. Residues 120–141 form an SGF11-type zinc finger; sequence CCCPNCERMVAAVRFAPHLQTC. The segment covering 156–166 has biased composition (low complexity); it reads LTVSSRSSSTS. The interval 156 to 209 is disordered; sequence LTVSSRSSSTSTGGGQANEKSTDDEDWSLDSRPGKSTKNSRNKGSKKNQKNKLK. Residues 193–209 show a composition bias toward basic residues; the sequence is KNSRNKGSKKNQKNKLK.

It belongs to the SGF11 family. Component of some SAGA transcription coactivator-HAT complexes, at least composed of Ada2b, not/nonstop, Pcaf/Gcn5, Sgf11 and Spt3. Within the SAGA complex, Sgf11, e(y)2, and not/nonstop form an additional subcomplex of SAGA called the DUB module (deubiquitination module). Interacts directly with not/nonstop. Interacts with the AMEX complex component xmas-2. Interacts with Cbp80; important for promoter recruitment of Sgf11 that is not associated with the DUB module.

It localises to the nucleus. It is found in the nucleoplasm. The protein localises to the cytoplasm. In terms of biological role, component of the transcription regulatory histone acetylation (HAT) complex SAGA, a multiprotein complex that activates transcription by remodeling chromatin and mediating histone acetylation and deubiquitination. Within the SAGA complex, participates in a subcomplex that specifically deubiquitinates histone H2B. The SAGA complex is recruited to specific gene promoters by activators, where it is required for transcription. Required for nuclear receptor-mediated transactivation. Binds independently on SAGA to promoters in an RNA-dependent manner. Binds to mRNA and is essential for total mRNA export from the nucleus. Required to counteract heterochromatin silencing. Controls the development of neuronal connectivity in visual system by being required for accurate axon targeting in the optic lobe. Required for expression of ecdysone-induced genes such as br/broad. The protein is SAGA-associated factor 11 homolog 1 of Drosophila willistoni (Fruit fly).